Here is an 865-residue protein sequence, read N- to C-terminus: DNA topoisomerase 1 (865 aa).

Positions 3-142 constitute a Toprim domain; sequence KALVIVESPA…RYSRVVFNEI (140 aa). Mg(2+) is bound at residue Glu9. The segment at 37–65 is disordered; that stretch reads LPTSGSAAKKSADSTSTKTAKKPKKDERG. Residues 39–54 show a composition bias toward low complexity; that stretch reads TSGSAAKKSADSTSTK. Asp111 contacts Mg(2+). Positions 158–575 constitute a Topo IA-type catalytic domain; sequence NINRVNAQQA…NFFSDFTQQL (418 aa). The tract at residues 192–197 is interaction with DNA; it reads SAGRVQ. The active-site O-(5'-phospho-DNA)-tyrosine intermediate is the Tyr319. 3 consecutive C4-type zinc fingers follow at residues 599–630, 662–689, and 711–736; these read CPTCGRKMGIRTASTGVFLGCSGYALSPKERC, CQKCGTAMDSYLIDPKRKLHVCGNNPTC, and CEKCGSEMHLKMGRFGKYMACTNDEC.

The protein belongs to the type IA topoisomerase family. As to quaternary structure, monomer. Mg(2+) is required as a cofactor.

It carries out the reaction ATP-independent breakage of single-stranded DNA, followed by passage and rejoining.. In terms of biological role, releases the supercoiling and torsional tension of DNA, which is introduced during the DNA replication and transcription, by transiently cleaving and rejoining one strand of the DNA duplex. Introduces a single-strand break via transesterification at a target site in duplex DNA. The scissile phosphodiester is attacked by the catalytic tyrosine of the enzyme, resulting in the formation of a DNA-(5'-phosphotyrosyl)-enzyme intermediate and the expulsion of a 3'-OH DNA strand. The free DNA strand then undergoes passage around the unbroken strand, thus removing DNA supercoils. Finally, in the religation step, the DNA 3'-OH attacks the covalent intermediate to expel the active-site tyrosine and restore the DNA phosphodiester backbone. The sequence is that of DNA topoisomerase 1 from Salmonella typhimurium (strain LT2 / SGSC1412 / ATCC 700720).